A 329-amino-acid polypeptide reads, in one-letter code: D-alanine--D-alanine ligase (329 aa).

One can recognise an ATP-grasp domain in the interval 120 to 326; that stretch reads KLWLSAIGIP…FADYLEQILR (207 aa). ATP is bound at residue 150–205; it reads ALAKWGKVFIKAASQGSSVGCYSASNEADLVKGIADAFGYSEQVLIEKAVKPRELE. 3 residues coordinate Mg(2+): aspartate 280, glutamate 293, and asparagine 295.

Belongs to the D-alanine--D-alanine ligase family. Requires Mg(2+) as cofactor. Mn(2+) serves as cofactor.

The protein localises to the cytoplasm. It carries out the reaction 2 D-alanine + ATP = D-alanyl-D-alanine + ADP + phosphate + H(+). The protein operates within cell wall biogenesis; peptidoglycan biosynthesis. Cell wall formation. This Aeromonas hydrophila subsp. hydrophila (strain ATCC 7966 / DSM 30187 / BCRC 13018 / CCUG 14551 / JCM 1027 / KCTC 2358 / NCIMB 9240 / NCTC 8049) protein is D-alanine--D-alanine ligase.